Reading from the N-terminus, the 227-residue chain is Cytidylate kinase (227 aa).

12–20 (GPSGAGKGT) contributes to the ATP binding site.

Belongs to the cytidylate kinase family. Type 1 subfamily.

The protein localises to the cytoplasm. It carries out the reaction CMP + ATP = CDP + ADP. The enzyme catalyses dCMP + ATP = dCDP + ADP. This is Cytidylate kinase from Salmonella typhimurium (strain LT2 / SGSC1412 / ATCC 700720).